A 280-amino-acid chain; its full sequence is Pantothenate synthetase (280 aa).

31–38 (MGNLHVGH) serves as a coordination point for ATP. His-38 acts as the Proton donor in catalysis. Gln-62 contacts (R)-pantoate. Gln-62 is a beta-alanine binding site. 150–153 (GKKD) lines the ATP pocket. Residue Gln-156 participates in (R)-pantoate binding. ATP-binding positions include Val-179 and 187 to 190 (MSSR).

Belongs to the pantothenate synthetase family. As to quaternary structure, homodimer.

It is found in the cytoplasm. The enzyme catalyses (R)-pantoate + beta-alanine + ATP = (R)-pantothenate + AMP + diphosphate + H(+). It participates in cofactor biosynthesis; (R)-pantothenate biosynthesis; (R)-pantothenate from (R)-pantoate and beta-alanine: step 1/1. Functionally, catalyzes the condensation of pantoate with beta-alanine in an ATP-dependent reaction via a pantoyl-adenylate intermediate. The sequence is that of Pantothenate synthetase from Xanthomonas oryzae pv. oryzae (strain MAFF 311018).